We begin with the raw amino-acid sequence, 446 residues long: Tubulin beta-1 chain (446 aa).

The GTP site is built by glutamine 11, glutamate 69, serine 138, glycine 142, threonine 143, glycine 144, asparagine 204, and asparagine 226. Glutamate 69 contributes to the Mg(2+) binding site.

The protein belongs to the tubulin family. Dimer of alpha and beta chains. A typical microtubule is a hollow water-filled tube with an outer diameter of 25 nm and an inner diameter of 15 nM. Alpha-beta heterodimers associate head-to-tail to form protofilaments running lengthwise along the microtubule wall with the beta-tubulin subunit facing the microtubule plus end conferring a structural polarity. Microtubules usually have 13 protofilaments but different protofilament numbers can be found in some organisms and specialized cells. The cofactor is Mg(2+).

Its subcellular location is the cytoplasm. The protein localises to the cytoskeleton. Functionally, tubulin is the major constituent of microtubules, a cylinder consisting of laterally associated linear protofilaments composed of alpha- and beta-tubulin heterodimers. Microtubules grow by the addition of GTP-tubulin dimers to the microtubule end, where a stabilizing cap forms. Below the cap, tubulin dimers are in GDP-bound state, owing to GTPase activity of alpha-tubulin. This is Tubulin beta-1 chain (TUBB1) from Suillus bovinus (Jersey cow bolete).